The chain runs to 312 residues: MITEVFFRNFYRNYAKFDVVSVERREFAFQPFGGGMVRHKSFNSVDELRRYIVEKTPKHIYHSVAYYERPGEEDMDRKGWLGADLVFDIDGDHLNTEACKGSAVVSLRCLEDAKEETNKLIDILVRELDLRPTRIVFSGNRGFHIHITSEEVLKLGTKERREVVNFIKGVGFDPSRFEVKLGRRRVKLYEEEPVGSLLRVRQAVENPDTLRVEIDEVVTQDIHRLIRLPGSLNGKTGLVAMPLELKDLERGVENIVERAIAFRKGNLKFRFEKPLIGEVLFEKIEARAGDLKILPAHVAIYLELQEFGKIYD.

Residues aspartate 88, aspartate 90, and aspartate 215 contribute to the active site.

This sequence belongs to the eukaryotic-type primase small subunit family. Heterodimer of a small subunit (PriS) and a large subunit (PriL). Mg(2+) is required as a cofactor. It depends on Mn(2+) as a cofactor.

Its function is as follows. Catalytic subunit of DNA primase, an RNA polymerase that catalyzes the synthesis of short RNA molecules used as primers for DNA polymerase during DNA replication. The small subunit contains the primase catalytic core and has DNA synthesis activity on its own. Binding to the large subunit stabilizes and modulates the activity, increasing the rate of DNA synthesis while decreasing the length of the DNA fragments, and conferring RNA synthesis capability. The DNA polymerase activity may enable DNA primase to also catalyze primer extension after primer synthesis. May also play a role in DNA repair. This Pyrobaculum arsenaticum (strain DSM 13514 / JCM 11321 / PZ6) protein is DNA primase small subunit PriS.